Reading from the N-terminus, the 273-residue chain is Chondrolectin (273 aa).

The signal sequence occupies residues 1–21; the sequence is MSRVVSLLLGAALLCGHGAFC. At 22 to 216 the chain is on the extracellular side; the sequence is RRVVSGQKVC…VVTEAGIIPN (195 aa). The 145-residue stretch at 35-179 folds into the C-type lectin domain; it reads FKHPCYKMAY…CNMKHNYICK (145 aa). 2 cysteine pairs are disulfide-bonded: C61/C178 and C144/C170. N86 is a glycosylation site (N-linked (GlcNAc...) asparagine). A helical membrane pass occupies residues 217–237; the sequence is LIYVVIPTIPLLLLILVAFGT. Topologically, residues 238-273 are cytoplasmic; the sequence is CCFQMLHKSKGRTKTSPNQSTLWISKSTRKESGMEV. Residues 248–273 form a disordered region; it reads GRTKTSPNQSTLWISKSTRKESGMEV. The segment covering 251 to 263 has biased composition (polar residues); that stretch reads KTSPNQSTLWISK.

Interacts with RABGGTB. Post-translationally, N-glycosylated. As to expression, found in spleen, testis, prostate and fetal liver. Expression limited to vascular muscle of testis, smooth muscle of prostate stroma, heart muscle, skeletal muscle, crypts of small intestine, and red pulp of spleen. B lymphocytes express isoform 2 only; peripheral blood T lymphocytes express isoform 3 only; granulocytes and monocytes express neither isoform 2 nor isoform 3. During development of T lymphocytes, bone marrow progenitor cells express isoform 2 only; thymocytes at different stages of maturation express predominantly isoform 2 and weakly isoform 3, and mature thymocytes express only isoform 2.

The protein resides in the cytoplasm. It localises to the membrane. It is found in the endoplasmic reticulum. The protein localises to the endoplasmic reticulum membrane. Functionally, may play a role in the development of the nervous system such as in neurite outgrowth and elongation. May be involved in motor axon growth and guidance. The polypeptide is Chondrolectin (CHODL) (Homo sapiens (Human)).